The sequence spans 141 residues: Hemoglobin subunit alpha-1/2 (141 aa).

The Globin domain occupies 1–141 (VLSPADKTNV…VSTVLTSKYR (141 aa)). At Ser-3 the chain carries Phosphoserine. Position 7 is an N6-succinyllysine (Lys-7). Thr-8 carries the phosphothreonine modification. At Lys-11 the chain carries N6-succinyllysine. Lys-16 carries the post-translational modification N6-acetyllysine; alternate. Lys-16 carries the N6-succinyllysine; alternate modification. Tyr-24 bears the Phosphotyrosine mark. At Lys-40 the chain carries N6-succinyllysine. At Ser-49 the chain carries Phosphoserine. His-58 is a binding site for O2. His-87 provides a ligand contact to heme b. The residue at position 102 (Ser-102) is a Phosphoserine. Position 108 is a phosphothreonine (Thr-108). Residue Ser-124 is modified to Phosphoserine. Phosphothreonine is present on residues Thr-134 and Thr-137. Ser-138 carries the post-translational modification Phosphoserine.

Belongs to the globin family. As to quaternary structure, heterotetramer of two alpha chains and two beta chains. In terms of tissue distribution, red blood cells.

Involved in oxygen transport from the lung to the various peripheral tissues. This is Hemoglobin subunit alpha-1/2 from Leptonychotes weddellii (Weddell seal).